A 215-amino-acid polypeptide reads, in one-letter code: Ras-related protein Rab-14 (215 aa).

N-acetylalanine is present on Ala2. Positions 21, 22, 23, 24, 25, 26, 38, 39, 40, 42, and 43 each coordinate GTP. Mg(2+) is bound at residue Ser25. Residues 42-47 carry the Switch 1 motif; that stretch reads HTIGVE. The Mg(2+) site is built by Thr43 and Asp66. Positions 68–77 match the Switch 2 motif; that stretch reads AGQERFRAVT. Gly69, Asn124, Lys125, Asp127, Ala155, and Lys156 together coordinate GTP. The disordered stretch occupies residues 188 to 215; that stretch reads SGVQHKPSAPQGGRLTSEPQPQREGCGC. 2 S-geranylgeranyl cysteine lipidation sites follow: Cys213 and Cys215. Cys215 carries the post-translational modification Cysteine methyl ester.

It belongs to the small GTPase superfamily. Rab family. As to quaternary structure, interacts with ZFYVE20. Interacts with KIF16B. Interacts (GTP-bound form) with RUFY1; the interaction recruits RUFY1 onto endosomal membranes. Interacts (GTP-bound form) with RAB11FIP1 (via its C-terminus); the interactions doesn't mediate RAB11FIP1 rectruitment to membranes. Interacts with RAB11FIP2. Mg(2+) serves as cofactor.

The protein resides in the recycling endosome. The protein localises to the early endosome membrane. Its subcellular location is the golgi apparatus membrane. It is found in the golgi apparatus. It localises to the trans-Golgi network membrane. The protein resides in the cytoplasmic vesicle. The protein localises to the phagosome. The catalysed reaction is GTP + H2O = GDP + phosphate + H(+). Regulated by guanine nucleotide exchange factors (GEFs) including DENND6A and DENND6B which promote the exchange of bound GDP for free GTP. Regulated by GTPase activating proteins (GAPs) which increase the GTP hydrolysis activity. Inhibited by GDP dissociation inhibitors (GDIs) which prevent Rab-GDP dissociation. Functionally, the small GTPases Rab are key regulators of intracellular membrane trafficking, from the formation of transport vesicles to their fusion with membranes. Rabs cycle between an inactive GDP-bound form and an active GTP-bound form that is able to recruit to membranes different set of downstream effectors directly responsible for vesicle formation, movement, tethering and fusion. Involved in membrane trafficking between the Golgi complex and endosomes during early embryonic development. Regulates the Golgi to endosome transport of FGFR-containing vesicles during early development, a key process for developing basement membrane and epiblast and primitive endoderm lineages during early postimplantation development. May act by modulating the kinesin KIF16B-cargo association to endosomes. Regulates, together with its guanine nucleotide exchange factor DENND6A, the specific endocytic transport of ADAM10, N-cadherin/CDH2 shedding and cell-cell adhesion. Mediates endosomal tethering and fusion through the interaction with RUFY1 and RAB4B. Interaction with RAB11FIP1 may function in the process of neurite formation. The polypeptide is Ras-related protein Rab-14 (RAB14) (Sus scrofa (Pig)).